Consider the following 427-residue polypeptide: 3-phosphoshikimate 1-carboxyvinyltransferase (427 aa).

Residues K22, S23, and R27 each coordinate 3-phosphoshikimate. K22 provides a ligand contact to phosphoenolpyruvate. Residues G96 and R124 each coordinate phosphoenolpyruvate. Positions 169, 170, 171, 197, 313, 336, and 340 each coordinate 3-phosphoshikimate. Position 171 (Q171) interacts with phosphoenolpyruvate. Catalysis depends on D313, which acts as the Proton acceptor. Residues R344, R386, and K411 each coordinate phosphoenolpyruvate.

Belongs to the EPSP synthase family. In terms of assembly, monomer.

Its subcellular location is the cytoplasm. The enzyme catalyses 3-phosphoshikimate + phosphoenolpyruvate = 5-O-(1-carboxyvinyl)-3-phosphoshikimate + phosphate. Its pathway is metabolic intermediate biosynthesis; chorismate biosynthesis; chorismate from D-erythrose 4-phosphate and phosphoenolpyruvate: step 6/7. Functionally, catalyzes the transfer of the enolpyruvyl moiety of phosphoenolpyruvate (PEP) to the 5-hydroxyl of shikimate-3-phosphate (S3P) to produce enolpyruvyl shikimate-3-phosphate and inorganic phosphate. This Shigella dysenteriae protein is 3-phosphoshikimate 1-carboxyvinyltransferase.